A 101-amino-acid chain; its full sequence is NAD(P)H-quinone oxidoreductase subunit 4L, chloroplastic (101 aa).

A run of 3 helical transmembrane segments spans residues 2–22, 32–52, and 61–81; these read MLEH…YGLI, MCLE…SDFF, and IFSI…SAIV.

Belongs to the complex I subunit 4L family. In terms of assembly, NDH is composed of at least 16 different subunits, 5 of which are encoded in the nucleus.

The protein resides in the plastid. It localises to the chloroplast thylakoid membrane. The catalysed reaction is a plastoquinone + NADH + (n+1) H(+)(in) = a plastoquinol + NAD(+) + n H(+)(out). It carries out the reaction a plastoquinone + NADPH + (n+1) H(+)(in) = a plastoquinol + NADP(+) + n H(+)(out). Its function is as follows. NDH shuttles electrons from NAD(P)H:plastoquinone, via FMN and iron-sulfur (Fe-S) centers, to quinones in the photosynthetic chain and possibly in a chloroplast respiratory chain. The immediate electron acceptor for the enzyme in this species is believed to be plastoquinone. Couples the redox reaction to proton translocation, and thus conserves the redox energy in a proton gradient. The protein is NAD(P)H-quinone oxidoreductase subunit 4L, chloroplastic of Gossypium hirsutum (Upland cotton).